Here is a 267-residue protein sequence, read N- to C-terminus: Thymidylate synthase (267 aa).

Arg-24 contributes to the dUMP binding site. His-54 lines the (6R)-5,10-methylene-5,6,7,8-tetrahydrofolate pocket. Position 129–130 (129–130) interacts with dUMP; it reads RR. Cys-149 functions as the Nucleophile in the catalytic mechanism. DUMP contacts are provided by residues 169–172, Asn-180, and 210–212; these read RSAD and HIY. Residue Asp-172 coordinates (6R)-5,10-methylene-5,6,7,8-tetrahydrofolate. Position 266 (Ala-266) interacts with (6R)-5,10-methylene-5,6,7,8-tetrahydrofolate.

The protein belongs to the thymidylate synthase family. Bacterial-type ThyA subfamily. In terms of assembly, homodimer.

The protein resides in the cytoplasm. The enzyme catalyses dUMP + (6R)-5,10-methylene-5,6,7,8-tetrahydrofolate = 7,8-dihydrofolate + dTMP. The protein operates within pyrimidine metabolism; dTTP biosynthesis. In terms of biological role, catalyzes the reductive methylation of 2'-deoxyuridine-5'-monophosphate (dUMP) to 2'-deoxythymidine-5'-monophosphate (dTMP) while utilizing 5,10-methylenetetrahydrofolate (mTHF) as the methyl donor and reductant in the reaction, yielding dihydrofolate (DHF) as a by-product. This enzymatic reaction provides an intracellular de novo source of dTMP, an essential precursor for DNA biosynthesis. The protein is Thymidylate synthase of Arthrobacter sp. (strain FB24).